We begin with the raw amino-acid sequence, 214 residues long: Probable GTP-binding protein EngB (214 aa).

Residues 40–212 (SLPEIVFVGK…KASFAQCIKH (173 aa)) enclose the EngB-type G domain. GTP is bound by residues 48-55 (GKSNVGKS), 75-79 (GRTRQ), 93-96 (DLPG), 160-163 (TKSD), and 191-193 (VSS). Positions 55 and 77 each coordinate Mg(2+).

Belongs to the TRAFAC class TrmE-Era-EngA-EngB-Septin-like GTPase superfamily. EngB GTPase family. Mg(2+) is required as a cofactor.

Functionally, necessary for normal cell division and for the maintenance of normal septation. This is Probable GTP-binding protein EngB from Rickettsia prowazekii (strain Madrid E).